A 547-amino-acid polypeptide reads, in one-letter code: Probable bifunctional tRNA threonylcarbamoyladenosine biosynthesis protein (547 aa).

A kae1 region spans residues 1–329; sequence MDTSKDLICI…YRSDMVEVNW (329 aa). Fe cation-binding residues include histidine 112, histidine 116, and tyrosine 133. L-threonylcarbamoyladenylate is bound by residues 133–137, aspartate 165, glycine 178, glutamate 182, and asparagine 262; that span reads YVSGG. Aspartate 290 is a Fe cation binding site. Residues 346–547 form the Protein kinase domain; the sequence is IIPEHLIGKG…KEVEKRARYL (202 aa). Residues 352 to 360 and lysine 373 each bind ATP; that span reads IGKGAEADI. Aspartate 465 acts as the Proton acceptor; for kinase activity in catalysis.

This sequence in the N-terminal section; belongs to the KAE1 / TsaD family. The protein in the C-terminal section; belongs to the protein kinase superfamily. Tyr protein kinase family. BUD32 subfamily. As to quaternary structure, component of the KEOPS complex that consists of Kae1, Bud32, Cgi121 and Pcc1; the whole complex dimerizes. Fe(2+) serves as cofactor.

Its subcellular location is the cytoplasm. The enzyme catalyses L-seryl-[protein] + ATP = O-phospho-L-seryl-[protein] + ADP + H(+). The catalysed reaction is L-threonyl-[protein] + ATP = O-phospho-L-threonyl-[protein] + ADP + H(+). It carries out the reaction L-threonylcarbamoyladenylate + adenosine(37) in tRNA = N(6)-L-threonylcarbamoyladenosine(37) in tRNA + AMP + H(+). In terms of biological role, required for the formation of a threonylcarbamoyl group on adenosine at position 37 (t(6)A37) in tRNAs that read codons beginning with adenine. Is a component of the KEOPS complex that is probably involved in the transfer of the threonylcarbamoyl moiety of threonylcarbamoyl-AMP (TC-AMP) to the N6 group of A37. The Kae1 domain likely plays a direct catalytic role in this reaction. The Bud32 domain probably displays kinase activity that regulates Kae1 function. This is Probable bifunctional tRNA threonylcarbamoyladenosine biosynthesis protein from Methanococcus maripaludis (strain C7 / ATCC BAA-1331).